The sequence spans 569 residues: Protein THEMIS3 (569 aa).

2 CABIT regions span residues 1–254 and 255–523; these read MEQT…ARLD and RKPR…EERS.

The protein belongs to the themis family. In terms of tissue distribution, specifically expressed in the intestine.

The chain is Protein THEMIS3 (Themis3) from Mus musculus (Mouse).